The following is a 251-amino-acid chain: Triosephosphate isomerase (251 aa).

9–11 contributes to the substrate binding site; that stretch reads NWK. Histidine 94 functions as the Electrophile in the catalytic mechanism. Glutamate 167 (proton acceptor) is an active-site residue. Residues glycine 173, serine 213, and 234–235 contribute to the substrate site; that span reads GG.

Belongs to the triosephosphate isomerase family. In terms of assembly, homodimer.

It is found in the cytoplasm. It catalyses the reaction D-glyceraldehyde 3-phosphate = dihydroxyacetone phosphate. Its pathway is carbohydrate biosynthesis; gluconeogenesis. It participates in carbohydrate degradation; glycolysis; D-glyceraldehyde 3-phosphate from glycerone phosphate: step 1/1. In terms of biological role, involved in the gluconeogenesis. Catalyzes stereospecifically the conversion of dihydroxyacetone phosphate (DHAP) to D-glyceraldehyde-3-phosphate (G3P). This Finegoldia magna (strain ATCC 29328 / DSM 20472 / WAL 2508) (Peptostreptococcus magnus) protein is Triosephosphate isomerase.